The chain runs to 316 residues: Aspartate carbamoyltransferase catalytic subunit (316 aa).

Carbamoyl phosphate contacts are provided by Arg-66 and Thr-67. L-aspartate is bound at residue Lys-94. 3 residues coordinate carbamoyl phosphate: Arg-116, His-146, and Gln-149. L-aspartate is bound by residues Arg-179 and Arg-234. Positions 275 and 276 each coordinate carbamoyl phosphate.

It belongs to the aspartate/ornithine carbamoyltransferase superfamily. ATCase family. Heterododecamer (2C3:3R2) of six catalytic PyrB chains organized as two trimers (C3), and six regulatory PyrI chains organized as three dimers (R2).

It catalyses the reaction carbamoyl phosphate + L-aspartate = N-carbamoyl-L-aspartate + phosphate + H(+). The protein operates within pyrimidine metabolism; UMP biosynthesis via de novo pathway; (S)-dihydroorotate from bicarbonate: step 2/3. Functionally, catalyzes the condensation of carbamoyl phosphate and aspartate to form carbamoyl aspartate and inorganic phosphate, the committed step in the de novo pyrimidine nucleotide biosynthesis pathway. The sequence is that of Aspartate carbamoyltransferase catalytic subunit from Nitrosomonas eutropha (strain DSM 101675 / C91 / Nm57).